A 122-amino-acid chain; its full sequence is uncharacterized protein (122 aa).

Positions 79-114 (VIEDVASAIKEMMESAAKDLDKIEEVIKESLEKYLR) form a coiled coil.

This is an uncharacterized protein from Archaeoglobus fulgidus (strain ATCC 49558 / DSM 4304 / JCM 9628 / NBRC 100126 / VC-16).